Here is a 431-residue protein sequence, read N- to C-terminus: MQASIESTGNLERRLSFSLPEDRLQSHIVGRLGEIARTTRIKGFRPGKVPAKVIEQRFGAQVRGEALDGLLRETFDAAVREHDLRIVGSPRIDKGEEGEFSFVATVEVVPDFGDIDVSKLTVVRHSAEISDADIDQMIENLQNQRRTWAPVSRGAQDGDLVAVETWSQAGEERLPAEGTEKGSIVLGQGMMFETIEKGLVGLAKGEEKTLDVEFPADWRVPVLAGKTVQVTVKVAEVSEPVVPAVDEAFIKSFGVKGGDVEQFRSDIRANLERELKGALMNRLRREVGEQLIAAYASVEMPPRLVENEARAMLAQQVEQIRRNGQNVGEIPADAHEGFKDAAAKRVLVGLLVGEVARVNDLRLEAKRLNETMRLIASTYEEPEQVIEMYRNDPQLMSGLQNRVMEEQVIDWIAERAQHTEEKLSFQDAIRQ.

A PPIase FKBP-type domain is found at G158–P243.

It belongs to the FKBP-type PPIase family. Tig subfamily.

It localises to the cytoplasm. The catalysed reaction is [protein]-peptidylproline (omega=180) = [protein]-peptidylproline (omega=0). Functionally, involved in protein export. Acts as a chaperone by maintaining the newly synthesized protein in an open conformation. Functions as a peptidyl-prolyl cis-trans isomerase. The chain is Trigger factor from Stenotrophomonas maltophilia (strain R551-3).